Reading from the N-terminus, the 297-residue chain is 33 kDa chaperonin (297 aa).

Intrachain disulfides connect cysteine 239-cysteine 241 and cysteine 272-cysteine 275.

The protein belongs to the HSP33 family. In terms of processing, under oxidizing conditions two disulfide bonds are formed involving the reactive cysteines. Under reducing conditions zinc is bound to the reactive cysteines and the protein is inactive.

Its subcellular location is the cytoplasm. Redox regulated molecular chaperone. Protects both thermally unfolding and oxidatively damaged proteins from irreversible aggregation. Plays an important role in the bacterial defense system toward oxidative stress. The sequence is that of 33 kDa chaperonin from Synechococcus elongatus (strain ATCC 33912 / PCC 7942 / FACHB-805) (Anacystis nidulans R2).